The chain runs to 718 residues: Probable GTP diphosphokinase RSH2, chloroplastic (718 aa).

The N-terminal 68 residues, 1–68, are a transit peptide targeting the chloroplast; that stretch reads MSVPAIAVYT…LFSSPTAAPR (68 aa). Residues 9-48 form a disordered region; it reads YTSPPGAVYTSSSSSELEASSRGSAPCATAAPPSPASSHR. Residues 19-39 show a composition bias toward low complexity; the sequence is SSSSSELEASSRGSAPCATAA. In terms of domain architecture, HD spans 243–347; that stretch reads YLQHCVETAV…IKLADRLHNM (105 aa).

The protein belongs to the RelA/SpoT family.

It is found in the plastid. Its subcellular location is the chloroplast. The enzyme catalyses GTP + ATP = guanosine 3'-diphosphate 5'-triphosphate + AMP. Its function is as follows. Probable ppGpp (guanosine 3'-diphosphate 5'-diphosphate) synthetase that may be involved in a rapid plant ppGpp-mediated response to pathogens and other stresses. In Oryza sativa subsp. japonica (Rice), this protein is Probable GTP diphosphokinase RSH2, chloroplastic (RSH2).